The following is a 138-amino-acid chain: Endoribonuclease YbeY (138 aa).

Residues His98, His102, and His108 each contribute to the Zn(2+) site.

Belongs to the endoribonuclease YbeY family. It depends on Zn(2+) as a cofactor.

The protein resides in the cytoplasm. In terms of biological role, single strand-specific metallo-endoribonuclease involved in late-stage 70S ribosome quality control and in maturation of the 3' terminus of the 16S rRNA. The chain is Endoribonuclease YbeY from Thermosipho melanesiensis (strain DSM 12029 / CIP 104789 / BI429).